The following is a 575-amino-acid chain: Phosphoenolpyruvate-protein phosphotransferase (575 aa).

The Tele-phosphohistidine intermediate role is filled by His191. Arg298 and Arg334 together coordinate phosphoenolpyruvate. Mg(2+) is bound by residues Glu435 and Asp459. Phosphoenolpyruvate contacts are provided by residues Asn458–Asp459 and Arg469. Cys506 (proton donor) is an active-site residue.

This sequence belongs to the PEP-utilizing enzyme family. As to quaternary structure, homodimer. It depends on Mg(2+) as a cofactor.

It localises to the cytoplasm. It catalyses the reaction L-histidyl-[protein] + phosphoenolpyruvate = N(pros)-phospho-L-histidyl-[protein] + pyruvate. In terms of biological role, general (non sugar-specific) component of the phosphoenolpyruvate-dependent sugar phosphotransferase system (sugar PTS). This major carbohydrate active-transport system catalyzes the phosphorylation of incoming sugar substrates concomitantly with their translocation across the cell membrane. Enzyme I transfers the phosphoryl group from phosphoenolpyruvate (PEP) to the phosphoryl carrier protein (HPr). This Lactococcus lactis subsp. lactis (strain IL1403) (Streptococcus lactis) protein is Phosphoenolpyruvate-protein phosphotransferase (ptsI).